The chain runs to 168 residues: Crossover junction endodeoxyribonuclease RuvC (168 aa).

Residues D9, E70, and D145 contribute to the active site. Residues D9, E70, and D145 each coordinate Mg(2+).

The protein belongs to the RuvC family. As to quaternary structure, homodimer which binds Holliday junction (HJ) DNA. The HJ becomes 2-fold symmetrical on binding to RuvC with unstacked arms; it has a different conformation from HJ DNA in complex with RuvA. In the full resolvosome a probable DNA-RuvA(4)-RuvB(12)-RuvC(2) complex forms which resolves the HJ. Mg(2+) serves as cofactor.

The protein resides in the cytoplasm. It carries out the reaction Endonucleolytic cleavage at a junction such as a reciprocal single-stranded crossover between two homologous DNA duplexes (Holliday junction).. In terms of biological role, the RuvA-RuvB-RuvC complex processes Holliday junction (HJ) DNA during genetic recombination and DNA repair. Endonuclease that resolves HJ intermediates. Cleaves cruciform DNA by making single-stranded nicks across the HJ at symmetrical positions within the homologous arms, yielding a 5'-phosphate and a 3'-hydroxyl group; requires a central core of homology in the junction. The consensus cleavage sequence is 5'-(A/T)TT(C/G)-3'. Cleavage occurs on the 3'-side of the TT dinucleotide at the point of strand exchange. HJ branch migration catalyzed by RuvA-RuvB allows RuvC to scan DNA until it finds its consensus sequence, where it cleaves and resolves the cruciform DNA. In Chlamydia caviae (strain ATCC VR-813 / DSM 19441 / 03DC25 / GPIC) (Chlamydophila caviae), this protein is Crossover junction endodeoxyribonuclease RuvC.